A 272-amino-acid polypeptide reads, in one-letter code: MPALDEIKSSWADEVELDSGSLPPPTEIVENGQKVVTEYKYNKDDKKVKVVRTYKITRLVVPKSVAKRKNWAKFGDSAGDKPGPNPQTTFVSEDIYMQFVSNKEEEQKSDNALDSLKNIAKCRICEGEHWSVQCPYKGTSYEAGKAKPVPAAQPESSSAPIKSGKYVPPSMRDSQKAALGANPRGRDDTTAIRISNLSEAMTEADLEELVKKIGPHSKMFLARDKNTGLCKGFAYVHFKSRRDAATAIELLNGHGYDHLILNVEWSKPQNPQ.

Disordered stretches follow at residues 1-28 (MPAL…PTEI) and 143-187 (AGKA…RGRD). The RRM domain maps to 190-268 (TAIRISNLSE…LILNVEWSKP (79 aa)).

It belongs to the eIF-3 subunit G family. As to quaternary structure, component of the eukaryotic translation initiation factor 3 (eIF-3) complex.

Its subcellular location is the cytoplasm. Its function is as follows. RNA-binding component of the eukaryotic translation initiation factor 3 (eIF-3) complex, which is involved in protein synthesis of a specialized repertoire of mRNAs and, together with other initiation factors, stimulates binding of mRNA and methionyl-tRNAi to the 40S ribosome. The eIF-3 complex specifically targets and initiates translation of a subset of mRNAs involved in cell proliferation. This subunit can bind 18S rRNA. The protein is Eukaryotic translation initiation factor 3 subunit G of Culex quinquefasciatus (Southern house mosquito).